The sequence spans 157 residues: Protein Smg (157 aa).

The protein belongs to the Smg family.

The polypeptide is Protein Smg (Pectobacterium atrosepticum (strain SCRI 1043 / ATCC BAA-672) (Erwinia carotovora subsp. atroseptica)).